The following is a 179-amino-acid chain: Replication restart protein DnaT (179 aa).

The segment at 156-179 (GGLPKRDVNTVSEPDSQIPPGFRG) is disordered.

The protein belongs to the DnaT family. In terms of assembly, homooligomerizes. Interacts with PriB. Component of the replication restart primosome. Primosome assembly occurs via a 'hand-off' mechanism. PriA binds to replication forks, subsequently PriB then DnaT bind; DnaT then displaces ssDNA to generate the helicase loading substrate.

Its function is as follows. Involved in the restart of stalled replication forks, which reloads the replicative helicase on sites other than the origin of replication. Can function in multiple replication restart pathways. Displaces ssDNA from a PriB-ssDNA complex. Probably forms a spiral filament on ssDNA. In Escherichia coli O81 (strain ED1a), this protein is Replication restart protein DnaT.